Reading from the N-terminus, the 40-residue chain is Large ribosomal subunit protein bL36 (40 aa).

The protein belongs to the bacterial ribosomal protein bL36 family.

The chain is Large ribosomal subunit protein bL36 from Corynebacterium glutamicum (strain R).